A 136-amino-acid polypeptide reads, in one-letter code: Small ribosomal subunit protein bS6 (136 aa).

Positions glutamate 117 to valine 130 are enriched in basic and acidic residues. Positions glutamate 117–leucine 136 are disordered.

It belongs to the bacterial ribosomal protein bS6 family.

In terms of biological role, binds together with bS18 to 16S ribosomal RNA. This Bartonella quintana (strain Toulouse) (Rochalimaea quintana) protein is Small ribosomal subunit protein bS6.